The sequence spans 332 residues: D-lactate dehydrogenase (332 aa).

NAD(+) contacts are provided by residues 155–156 (RI), Asp-175, 206–207 (VP), Asn-212, and 233–235 (FAR). Active-site residues include Arg-235 and Glu-264. Catalysis depends on His-296, which acts as the Proton donor.

The protein belongs to the D-isomer specific 2-hydroxyacid dehydrogenase family. In terms of assembly, homodimer.

It carries out the reaction (R)-lactate + NAD(+) = pyruvate + NADH + H(+). This Lactiplantibacillus pentosus (Lactobacillus pentosus) protein is D-lactate dehydrogenase.